The primary structure comprises 529 residues: Beta-hexosaminidase subunit alpha (529 aa).

Positions 1-22 (MTSSRLWFSLLLAAAFAGRATA) are cleaved as a signal peptide. Residues 23-88 (LWPWPQNFQT…PRPYLTGKRH (66 aa)) constitute a propeptide that is removed on maturation. Residues cysteine 58 and cysteine 104 are joined by a disulfide bond. Asparagine 115, asparagine 157, and asparagine 295 each carry an N-linked (GlcNAc...) asparagine glycan. A disulfide bridge connects residues cysteine 277 and cysteine 328. Residue glutamate 323 is the Proton donor of the active site. Residues 423-424 (NR) form a critical for hydrolysis GM2 gangliosides region. Cysteine 505 and cysteine 522 are joined by a disulfide.

It belongs to the glycosyl hydrolase 20 family. As to quaternary structure, there are 3 beta-hexosaminidase isozymes: isozyme A (hexosaminidase A) is a heterodimer composed of one subunit alpha and one subunit beta (chain A and B); isozyme B (hexosaminidase B) is a homodimer of two beta subunits (two chains A and B); isozyme S (hexosaminidase S) is a homodimer of two alpha subunits. The composition of the dimer (isozyme A versus isozyme S) has a significant effect on the substrate specificity of the alpha subunit active site. Post-translationally, N-linked glycan at Asn-115 consists of Man(3)-GlcNAc(2). N-linked glycan at Asn-157 consists of either GlcNAc or GlcNAc(2)-Man(7-9). N-linked glycan at Asn-295 consists of either GlcNAc, GlcNAc-Fuc, or GlcNAc(2)-Man(4).

It is found in the lysosome. It catalyses the reaction Hydrolysis of terminal non-reducing N-acetyl-D-hexosamine residues in N-acetyl-beta-D-hexosaminides.. The catalysed reaction is N-acetyl-beta-D-galactosaminyl-(1-&gt;4)-beta-D-3-sulfogalactosyl-(1-&gt;4)-beta-D-glucosyl-(1&lt;-&gt;1')-ceramide + H2O = a beta-D-3-sulfogalactosyl-(1-&gt;4)-beta-D-glucosyl-(1&lt;-&gt;1')-ceramide + N-acetyl-beta-D-galactosamine. It carries out the reaction a ganglioside GM2 (d18:1(4E)) + H2O = a ganglioside GM3 (d18:1(4E)) + N-acetyl-beta-D-galactosamine. The enzyme catalyses a ganglioside GM2 + H2O = a ganglioside GM3 + N-acetyl-beta-D-galactosamine. It catalyses the reaction beta-D-GalNAc-(1-&gt;4)-alpha-L-IdoA-(1-&gt;3)-beta-D-GalNAc-4-sulfate-(1-&gt;4)-alpha-L-IdoA-(1-&gt;3)-D-GalNAc-4-sulfate + H2O = alpha-L-IdoA-(1-&gt;3)-beta-D-GalNAc-4-sulfate-(1-&gt;4)-alpha-L-IdoA-(1-&gt;3)-D-GalNAc-4-sulfate + N-acetyl-D-galactosamine. The catalysed reaction is N-acetyl-beta-D-6-sulfogalactosaminyl-(1-&gt;4)-alpha-L-iduronyl-(1-&gt;3)-N-acetyl-D-6-sulfogalactosamine + H2O = alpha-L-iduronyl-(1-&gt;3)-N-acetyl-D-6-sulfogalactosamine + N-acetyl-D-6-sulfogalactosamine. Its activity is regulated as follows. Addition of GM2A stimulates the hydrolysis of sulfated glycosphingolipid SM2 and the ganglioside GM2. Functionally, hydrolyzes the non-reducing end N-acetyl-D-hexosamine and/or sulfated N-acetyl-D-hexosamine of glycoconjugates, such as the oligosaccharide moieties from proteins and neutral glycolipids, or from certain mucopolysaccharides. The isozyme S is as active as the isozyme A on the anionic bis-sulfated glycans, the chondroitin-6-sulfate trisaccharide (C6S-3), and the dermatan sulfate pentasaccharide, and the sulfated glycosphingolipid SM2. The isozyme B does not hydrolyze each of these substrates, however hydrolyzes efficiently neutral oligosaccharide. Only the isozyme A is responsible for the degradation of GM2 gangliosides in the presence of GM2A. This is Beta-hexosaminidase subunit alpha from Homo sapiens (Human).